The sequence spans 469 residues: Probable Xaa-Pro aminopeptidase AN0832 (469 aa).

D260, D271, E398, and E437 together coordinate Mn(2+).

The protein belongs to the peptidase M24B family. The cofactor is Mn(2+).

The catalysed reaction is Release of any N-terminal amino acid, including proline, that is linked to proline, even from a dipeptide or tripeptide.. Catalyzes the removal of a penultimate prolyl residue from the N-termini of peptides. The polypeptide is Probable Xaa-Pro aminopeptidase AN0832 (Emericella nidulans (strain FGSC A4 / ATCC 38163 / CBS 112.46 / NRRL 194 / M139) (Aspergillus nidulans)).